The primary structure comprises 381 residues: Opsin Rh2 (381 aa).

Topologically, residues 1-56 (MERSHLPETPFDLAHSGPRFQAQSSGNGSVLDNVLPDMAHLVNPYWSRFAPMDPMM) are extracellular. Asn-27 carries N-linked (GlcNAc...) asparagine glycosylation. The helical transmembrane segment at 57-81 (SKILGLFTLAIMIISCCGNGVVVYI) threads the bilayer. Residues 82–93 (FGGTKSLRTPAN) lie on the Cytoplasmic side of the membrane. A helical transmembrane segment spans residues 94–119 (LLVLNLAFSDFCMMASQSPVMIINFY). At 120–133 (YETWVLGPLWCDIY) the chain is on the extracellular side. Cys-130 and Cys-207 form a disulfide bridge. Residues 134–153 (AGCGSLFGCVSIWSMCMIAF) traverse the membrane as a helical segment. The Cytoplasmic portion of the chain corresponds to 154 to 172 (DRYNVIVKGINGTPMTIKT). The helical transmembrane segment at 173-196 (SIMKILFIWMMAVFWTVMPLIGWS) threads the bilayer. Residues 197 to 220 (AYVPEGNLTACSIDYMTRMWNPRS) lie on the Extracellular side of the membrane. A helical transmembrane segment spans residues 221–248 (YLITYSLFVYYTPLFLICYSYWFIIAAV). Over 249–283 (AAHEKAMREQAKKMNVKSLRSSEDCDKSAEGKLAK) the chain is Cytoplasmic. Residues 284–307 (VALTTISLWFMAWTPYLVICYFGL) traverse the membrane as a helical segment. Topologically, residues 308-314 (FKIDGLT) are extracellular. The helical transmembrane segment at 315 to 339 (PLTTIWGATFAKTSAVYNPIVYGIS) threads the bilayer. Residue Lys-326 is modified to N6-(retinylidene)lysine. The Cytoplasmic segment spans residues 340–381 (HPKYRIVLKEKCPMCVFGNTDEPKPDAPASDTETTSEADSKA). The segment at 359-381 (TDEPKPDAPASDTETTSEADSKA) is disordered. Residues 370–381 (DTETTSEADSKA) show a composition bias toward polar residues.

Belongs to the G-protein coupled receptor 1 family. Opsin subfamily. In terms of processing, phosphorylated on some or all of the serine and threonine residues present in the C-terminal region. As to expression, predominant opsin expressed in the dorsal ocelli.

The protein localises to the membrane. Visual pigments are the light-absorbing molecules that mediate vision. They consist of an apoprotein, opsin, covalently linked to cis-retinal. This Drosophila melanogaster (Fruit fly) protein is Opsin Rh2 (Rh2).